Consider the following 273-residue polypeptide: Shikimate dehydrogenase (NADP(+)) (273 aa).

Residues 15-17 (SKS) and threonine 62 contribute to the shikimate site. Lysine 66 acts as the Proton acceptor in catalysis. Glutamate 78 serves as a coordination point for NADP(+). Shikimate-binding residues include asparagine 87 and aspartate 103. NADP(+) is bound by residues 127–131 (GAGGA), 151–156 (NRTHDK), and methionine 214. Tyrosine 216 contributes to the shikimate binding site. Residue glycine 238 coordinates NADP(+).

It belongs to the shikimate dehydrogenase family. Homodimer.

It carries out the reaction shikimate + NADP(+) = 3-dehydroshikimate + NADPH + H(+). Its pathway is metabolic intermediate biosynthesis; chorismate biosynthesis; chorismate from D-erythrose 4-phosphate and phosphoenolpyruvate: step 4/7. In terms of biological role, involved in the biosynthesis of the chorismate, which leads to the biosynthesis of aromatic amino acids. Catalyzes the reversible NADPH linked reduction of 3-dehydroshikimate (DHSA) to yield shikimate (SA). The chain is Shikimate dehydrogenase (NADP(+)) from Shewanella denitrificans (strain OS217 / ATCC BAA-1090 / DSM 15013).